The following is a 190-amino-acid chain: Protein FAM210B, mitochondrial (190 aa).

A mitochondrion-targeting transit peptide spans 1 to 58 (MAGLLTLLGPAGRVSTRLRPLAPWLLGTATSCAPPLWALALSHPVPDARLLRTARGDC). Positions 56–66 (GDCLSRQEPNR) are enriched in basic and acidic residues. Residues 56–81 (GDCLSRQEPNRTPEPGGSVTGTEKKL) are disordered. One can recognise a DUF1279 domain in the interval 78–189 (EKKLSRTQQL…VGLFKPPATK (112 aa)). Helical transmembrane passes span 97-117 (VGVS…YTVV) and 148-168 (FVVA…ITLV).

The protein belongs to the FAM210 family. In terms of tissue distribution, expressed in late erythroblast differentiation stages.

The protein resides in the mitochondrion. The protein localises to the mitochondrion outer membrane. Its function is as follows. Plays a role in erythroid differentiation. Involved in cell proliferation and tumor cell growth suppression. Involved in the metabolic reprogramming of cancer cells in a PDK4-dependent manner. The protein is Protein FAM210B, mitochondrial of Mus musculus (Mouse).